The following is an 82-amino-acid chain: Putative defensin-like protein 191 (82 aa).

An N-terminal signal peptide occupies residues 1 to 28 (MAKSVNATGFITYMVIFLILTGISRVKA). 4 disulfide bridges follow: Cys33-Cys79, Cys46-Cys65, Cys51-Cys74, and Cys55-Cys76.

Belongs to the DEFL family.

It is found in the secreted. The sequence is that of Putative defensin-like protein 191 from Arabidopsis thaliana (Mouse-ear cress).